A 119-amino-acid polypeptide reads, in one-letter code: Acidic phospholipase A2 E (119 aa).

7 cysteine pairs are disulfide-bonded: C11–C71, C26–C118, C28–C44, C43–C99, C50–C92, C60–C85, and C78–C90. Residues Y27, G29, and G31 each coordinate Ca(2+). H47 is a catalytic residue. D48 is a binding site for Ca(2+). Residue D93 is part of the active site.

Belongs to the phospholipase A2 family. Group I subfamily. D49 sub-subfamily. The cofactor is Ca(2+). As to expression, expressed by the venom gland.

The protein resides in the secreted. It carries out the reaction a 1,2-diacyl-sn-glycero-3-phosphocholine + H2O = a 1-acyl-sn-glycero-3-phosphocholine + a fatty acid + H(+). Functionally, PLA2 catalyzes the calcium-dependent hydrolysis of the 2-acyl groups in 3-sn-phosphoglycerides. This Naja oxiana (Central Asian cobra) protein is Acidic phospholipase A2 E.